Consider the following 151-residue polypeptide: Endoribonuclease YbeY (151 aa).

The Zn(2+) site is built by H117, H121, and H127.

Belongs to the endoribonuclease YbeY family. Requires Zn(2+) as cofactor.

The protein resides in the cytoplasm. Its function is as follows. Single strand-specific metallo-endoribonuclease involved in late-stage 70S ribosome quality control and in maturation of the 3' terminus of the 16S rRNA. This is Endoribonuclease YbeY from Alkaliphilus oremlandii (strain OhILAs) (Clostridium oremlandii (strain OhILAs)).